Here is a 151-residue protein sequence, read N- to C-terminus: Superoxide dismutase [Cu-Zn] (151 aa).

A lipid anchor (S-palmitoyl cysteine) is attached at Cys6. Residues His45, His47, and His62 each contribute to the Cu cation site. Cys56 and Cys144 are disulfide-bonded. 4 residues coordinate Zn(2+): His62, His70, His79, and Asp82. His118 provides a ligand contact to Cu cation.

Belongs to the Cu-Zn superoxide dismutase family. As to quaternary structure, homodimer. It depends on Cu cation as a cofactor. Zn(2+) is required as a cofactor.

The protein resides in the cytoplasm. Its subcellular location is the nucleus. The enzyme catalyses 2 superoxide + 2 H(+) = H2O2 + O2. Destroys radicals which are normally produced within the cells and which are toxic to biological systems. The polypeptide is Superoxide dismutase [Cu-Zn] (sod1) (Xenopus tropicalis (Western clawed frog)).